A 767-amino-acid chain; its full sequence is Actin filament-associated protein 1-like 1 (767 aa).

The span at 83–97 shows a compositional bias: basic and acidic residues; it reads LRDMSDDGERSKEAS. The segment at 83-145 is disordered; sequence LRDMSDDGER…KSPEYISSHN (63 aa). Phosphoserine occurs at positions 87, 93, 97, 103, and 152. The segment covering 164 to 173 has biased composition (polar residues); sequence SYPTTRMNGE. Residues 164-210 form a disordered region; sequence SYPTTRMNGESKSSYNDSDAMSSSYESYDEEEEEEKGRQPKHQWPSE. Positions 174-189 are enriched in low complexity; sequence SKSSYNDSDAMSSSYE. Positions 219-315 constitute a PH 1 domain; that stretch reads DCRICAFLLR…WLKVIREVSR (97 aa). Phosphoserine occurs at positions 328 and 342. Residues 341–381 form a disordered region; it reads LSQEKQNSDSDSLGMNDSSSTLSRREACEHGKGKKNSLAEL. Residues 349 to 362 are compositionally biased toward polar residues; it reads DSDSLGMNDSSSTL. Positions 417-511 constitute a PH 2 domain; it reads EAPCCGYLNV…WLGLLLVEMG (95 aa). Residue Tyr-556 is modified to Phosphotyrosine. The disordered stretch occupies residues 563 to 605; sequence KVQDEEPQRPTGAQVKRHASSCSEKSHRADPQVKVKRHASSAN. A compositionally biased stretch (basic and acidic residues) spans 586–595; the sequence is EKSHRADPQV. Residues 610 to 700 are a coiled coil; it reads GKNRAEEDAR…AVKERLQQSL (91 aa). Positions 704–767 are disordered; sequence PALGLSVSSK…KAKEWEMKKT (64 aa). The span at 709-733 shows a compositional bias: polar residues; sequence SVSSKSKSQETTNKPQSSVPEQSLP. Ser-746 is modified (phosphoserine). Over residues 758–767 the composition is skewed to basic and acidic residues; that stretch reads KAKEWEMKKT.

In terms of assembly, interacts with CTTN.

The protein localises to the cytoplasm. The protein resides in the cell projection. It localises to the podosome. Its subcellular location is the invadopodium. Its function is as follows. May be involved in podosome and invadosome formation. This Rattus norvegicus (Rat) protein is Actin filament-associated protein 1-like 1 (Afap1l1).